Consider the following 132-residue polypeptide: Fibroblast growth factor 1 (132 aa).

Heparin is bound by residues asparagine 10 and lysine 108–lysine 120.

The protein belongs to the heparin-binding growth factors family.

The protein localises to the secreted. It localises to the cytoplasm. The protein resides in the cell cortex. It is found in the cytosol. Its subcellular location is the nucleus. Its function is as follows. Plays an important role in the regulation of cell survival, cell division, angiogenesis, cell differentiation and cell migration. Functions as a potent mitogen in vitro. Acts as a ligand for FGFR1 and integrins. Binds to FGFR1 in the presence of heparin leading to FGFR1 dimerization and activation via sequential autophosphorylation on tyrosine residues which act as docking sites for interacting proteins, leading to the activation of several signaling cascades. Binds to integrins. Its binding to integrins and subsequent ternary complex formation with integrins and FGFR1 are essential for FGF1 signaling. The polypeptide is Fibroblast growth factor 1 (fgf1) (Notophthalmus viridescens (Eastern newt)).